Consider the following 110-residue polypeptide: Flagellar hook-basal body complex protein FliE (110 aa).

The protein belongs to the FliE family.

It localises to the bacterial flagellum basal body. This chain is Flagellar hook-basal body complex protein FliE, found in Pseudomonas putida (strain GB-1).